We begin with the raw amino-acid sequence, 345 residues long: S-adenosylmethionine:tRNA ribosyltransferase-isomerase (345 aa).

This sequence belongs to the QueA family. Monomer.

The protein resides in the cytoplasm. The enzyme catalyses 7-aminomethyl-7-carbaguanosine(34) in tRNA + S-adenosyl-L-methionine = epoxyqueuosine(34) in tRNA + adenine + L-methionine + 2 H(+). It functions in the pathway tRNA modification; tRNA-queuosine biosynthesis. In terms of biological role, transfers and isomerizes the ribose moiety from AdoMet to the 7-aminomethyl group of 7-deazaguanine (preQ1-tRNA) to give epoxyqueuosine (oQ-tRNA). This chain is S-adenosylmethionine:tRNA ribosyltransferase-isomerase, found in Anaeromyxobacter sp. (strain K).